Reading from the N-terminus, the 627-residue chain is Endoglucanase 5 (627 aa).

An N-terminal signal peptide occupies residues 1–26 (MRKFGGSLFGVSLLLSVLLAAATAAA). Asp83 acts as the Nucleophile in catalysis. Asn196 carries N-linked (GlcNAc...) asparagine glycosylation. Residue His416 is part of the active site. N-linked (GlcNAc...) asparagine glycosylation occurs at Asn465. Residues Asp468 and Glu477 contribute to the active site. Asn561 carries an N-linked (GlcNAc...) asparagine glycan.

Belongs to the glycosyl hydrolase 9 (cellulase E) family.

Its subcellular location is the secreted. It catalyses the reaction Endohydrolysis of (1-&gt;4)-beta-D-glucosidic linkages in cellulose, lichenin and cereal beta-D-glucans.. The chain is Endoglucanase 5 from Arabidopsis thaliana (Mouse-ear cress).